A 148-amino-acid chain; its full sequence is Lysozyme C (148 aa).

A signal peptide spans 1–18 (MKAVIILGLVLLSVTVQG). The C-type lysozyme domain occupies 19-148 (KIFERCELAR…VSQYVQGCGV (130 aa)). 4 disulfide bridges follow: cysteine 24–cysteine 146, cysteine 48–cysteine 134, cysteine 83–cysteine 99, and cysteine 95–cysteine 113. Catalysis depends on residues glutamate 53 and aspartate 71.

Belongs to the glycosyl hydrolase 22 family. In terms of assembly, monomer.

The protein resides in the secreted. The catalysed reaction is Hydrolysis of (1-&gt;4)-beta-linkages between N-acetylmuramic acid and N-acetyl-D-glucosamine residues in a peptidoglycan and between N-acetyl-D-glucosamine residues in chitodextrins.. Lysozymes have primarily a bacteriolytic function; those in tissues and body fluids are associated with the monocyte-macrophage system and enhance the activity of immunoagents. In Macaca mulatta (Rhesus macaque), this protein is Lysozyme C (LYZ).